We begin with the raw amino-acid sequence, 277 residues long: 3-methyl-2-oxobutanoate hydroxymethyltransferase (277 aa).

Residues Asp-43 and Asp-82 each contribute to the Mg(2+) site. 3-methyl-2-oxobutanoate-binding positions include 43–44 (DS), Asp-82, and Lys-112. Glu-114 is a binding site for Mg(2+). The active-site Proton acceptor is the Glu-181.

Belongs to the PanB family. Homodecamer; pentamer of dimers. Mg(2+) serves as cofactor.

The protein localises to the cytoplasm. It catalyses the reaction 3-methyl-2-oxobutanoate + (6R)-5,10-methylene-5,6,7,8-tetrahydrofolate + H2O = 2-dehydropantoate + (6S)-5,6,7,8-tetrahydrofolate. It participates in cofactor biosynthesis; (R)-pantothenate biosynthesis; (R)-pantoate from 3-methyl-2-oxobutanoate: step 1/2. Functionally, catalyzes the reversible reaction in which hydroxymethyl group from 5,10-methylenetetrahydrofolate is transferred onto alpha-ketoisovalerate to form ketopantoate. In Bacillus velezensis (strain DSM 23117 / BGSC 10A6 / LMG 26770 / FZB42) (Bacillus amyloliquefaciens subsp. plantarum), this protein is 3-methyl-2-oxobutanoate hydroxymethyltransferase.